Consider the following 274-residue polypeptide: tRNA-cytidine(32) 2-sulfurtransferase (274 aa).

The PP-loop motif signature appears at 40–45 (SGGKDS). [4Fe-4S] cluster is bound by residues C115, C118, and C206.

It belongs to the TtcA family. In terms of assembly, homodimer. It depends on Mg(2+) as a cofactor. Requires [4Fe-4S] cluster as cofactor.

It localises to the cytoplasm. The enzyme catalyses cytidine(32) in tRNA + S-sulfanyl-L-cysteinyl-[cysteine desulfurase] + AH2 + ATP = 2-thiocytidine(32) in tRNA + L-cysteinyl-[cysteine desulfurase] + A + AMP + diphosphate + H(+). The protein operates within tRNA modification. In terms of biological role, catalyzes the ATP-dependent 2-thiolation of cytidine in position 32 of tRNA, to form 2-thiocytidine (s(2)C32). The sulfur atoms are provided by the cysteine/cysteine desulfurase (IscS) system. This chain is tRNA-cytidine(32) 2-sulfurtransferase, found in Pseudomonas putida (strain ATCC 47054 / DSM 6125 / CFBP 8728 / NCIMB 11950 / KT2440).